Here is a 75-residue protein sequence, read N- to C-terminus: UPF0352 protein VP2129 (75 aa).

It belongs to the UPF0352 family.

This chain is UPF0352 protein VP2129, found in Vibrio parahaemolyticus serotype O3:K6 (strain RIMD 2210633).